The sequence spans 391 residues: Transaldolase (391 aa).

Lys-134 functions as the Schiff-base intermediate with substrate in the catalytic mechanism. 2 consecutive EF-hand domains span residues 329–364 (TLTH…FDAL) and 365–387 (DANH…VLHL). Ca(2+)-binding residues include Asp-342, Asp-344, Asp-346, Glu-353, Asp-365, Asn-367, Asp-369, Lys-371, and Asp-376.

It belongs to the transaldolase family. Type 1 subfamily.

It localises to the cytoplasm. The enzyme catalyses D-sedoheptulose 7-phosphate + D-glyceraldehyde 3-phosphate = D-erythrose 4-phosphate + beta-D-fructose 6-phosphate. The protein operates within carbohydrate degradation; pentose phosphate pathway; D-glyceraldehyde 3-phosphate and beta-D-fructose 6-phosphate from D-ribose 5-phosphate and D-xylulose 5-phosphate (non-oxidative stage): step 2/3. Transaldolase is important for the balance of metabolites in the pentose-phosphate pathway. The chain is Transaldolase from Thermosynechococcus vestitus (strain NIES-2133 / IAM M-273 / BP-1).